The primary structure comprises 121 residues: Basic phospholipase A2 homolog textilotoxin B chain (121 aa).

7 disulfide bridges follow: Cys11–Cys72, Cys27–Cys120, Cys29–Cys45, Cys44–Cys101, Cys51–Cys94, Cys61–Cys87, and Cys80–Cys92.

Belongs to the phospholipase A2 family. Group I subfamily. N49 sub-subfamily. As to quaternary structure, heterohexamer. 2 forms exist: 2 A or 2 B chains, 2 C chains and 2 covalently-linked D chains, and 1 A or 1 B, 1 C, 2 covalently-linked D chains and 2 differentially glycosylated covalently-linked D chains. Textilotoxin was originally described as pentameric. Expressed by the venom gland.

Its subcellular location is the secreted. In terms of biological role, snake venom oligomeric phospholipase A2 that has potent presynaptic neurotoxicity. Chain B is not itself neurotoxic, but it is essential for the neurotoxicity of textilotoxin. Subunit B possesses a very low phospholipase activity. The chain is Basic phospholipase A2 homolog textilotoxin B chain from Pseudonaja textilis (Eastern brown snake).